A 75-amino-acid chain; its full sequence is MKNQLNFNIVSDEELSEANGGKLTFIQSTAAGDLYYNTNTHKYVYQQTQNAFGAAANTIVNGWMGGAAGGFGLHH.

A propeptide spanning residues 1–21 (MKNQLNFNIVSDEELSEANGG) is cleaved from the precursor. A helical membrane pass occupies residues 30–52 (AAGDLYYNTNTHKYVYQQTQNAF).

The protein resides in the secreted. The protein localises to the host cell membrane. Kills Lactococci. In Lactococcus lactis subsp. cremoris (Streptococcus cremoris), this protein is Bacteriocin lactococcin-A (lcnA).